Reading from the N-terminus, the 79-residue chain is U24-theraphotoxin-Cg1a (79 aa).

An N-terminal signal peptide occupies residues 1 to 19 (MRVLFIIAVLALISVGCYA). Residues 20–44 (SEMKDRSSRNEVLSAIFAIEEPQER) constitute a propeptide that is removed on maturation. 3 disulfides stabilise this stretch: C46-C61, C53-C66, and C60-C73. Residue W78 is modified to Tryptophan amide.

The protein belongs to the neurotoxin 10 (Hwtx-1) family. 35 (Jztx-27) subfamily. As to expression, expressed by the venom gland.

It is found in the secreted. Its function is as follows. Probable ion channel inhibitor. In Chilobrachys guangxiensis (Chinese earth tiger tarantula), this protein is U24-theraphotoxin-Cg1a.